The sequence spans 118 residues: Beta-2-microglobulin (118 aa).

An N-terminal signal peptide occupies residues 1 to 21 (MESRWGIVVIGLLCCVSWVEA). One can recognise an Ig-like C1-type domain in the interval 26–113 (PKIQVYTRSP…THNSVTKSVK (88 aa)). A disulfide bridge links Cys46 with Cys101.

This sequence belongs to the beta-2-microglobulin family. In terms of assembly, heterodimer of an alpha chain and a beta chain. Beta-2-microglobulin is the beta-chain of major histocompatibility complex class I molecules.

It is found in the secreted. Component of the class I major histocompatibility complex (MHC). Involved in the presentation of peptide antigens to the immune system. The polypeptide is Beta-2-microglobulin (B2M) (Tachyglossus aculeatus aculeatus (Southeast Australian short-beaked echidna)).